The primary structure comprises 354 residues: Guanine nucleotide-binding protein G(t) subunit alpha-3 (354 aa).

The interval 1–27 (MGSGISSESKESAKRSKELEKKLQEDA) is disordered. G2 carries the N-myristoyl glycine lipid modification. The span at 8–27 (ESKESAKRSKELEKKLQEDA) shows a compositional bias: basic and acidic residues. The region spanning 32 to 354 (RTVKLLLLGA…KENLKDCGLF (323 aa)) is the G-alpha domain. Residues 35–48 (KLLLLGAGESGKST) form a G1 motif region. Residues 40-47 (GAGESGKS), 175-181 (LHSRVKT), 200-204 (DVGGQ), 269-272 (NKKD), and A326 contribute to the GTP site. The Mg(2+) site is built by S47 and T181. The G2 motif stretch occupies residues 173–181 (DVLHSRVKT). Positions 196–205 (FRMFDVGGQR) are G3 motif. The interval 265-272 (VLFLNKKD) is G4 motif. The G5 motif stretch occupies residues 324–329 (TCATDT).

The protein belongs to the G-alpha family. G(i/o/t/z) subfamily. G proteins are composed of 3 units; alpha, beta and gamma, respectively GNAT3, GNB1 and GNG13 for Gustducin heterotrimer for bitter taste transduction. The alpha chain contains the guanine nucleotide binding site. Component of the TAS2R14-GNAT3 complex, consisting of TAS2R14, GNAT3, GNB1 and GNG2; within the complex interacts with TAS2R14; this complex plays a role in the perception of bitterness. Gustducin heterotrimer may also be composed of GNAT3, GNB3 and GNG13. Post-translationally, potential N-myristoylation may anchor alpha-subunit to the inner surface of plasma membrane. In terms of tissue distribution, expressed in taste buds (sensory organs of clustered epithelial cells) of the circumvallate, foliate and fungiform papillae of the tongue, as well as in nasoincisor, palatal and epiglottal taste buds at protein level. Expressed in enteroendocrine of the gut, in the lumenal pole of a subset of brush cells lining the stomach and the intestine at protein level. Detected in solitary cells throughout the respiratory track. Expressed also in spermatozoa.

The protein localises to the cytoplasm. Functionally, guanine nucleotide-binding protein (G protein) alpha subunit playing a prominent role in bitter and sweet taste transduction as well as in umami (monosodium glutamate, monopotassium glutamate, and inosine monophosphate) taste transduction. Transduction by this alpha subunit involves coupling of specific cell-surface receptors with a cGMP-phosphodiesterase; Activation of phosphodiesterase lowers intracellular levels of cAMP and cGMP which may open a cyclic nucleotide-suppressible cation channel leading to influx of calcium, ultimately leading to release of neurotransmitter. Indeed, denatonium and strychnine induce transient reduction in cAMP and cGMP in taste tissue, whereas this decrease is inhibited by GNAT3 antibody. Gustducin heterotrimer transduces response to bitter and sweet compounds via regulation of phosphodiesterase for alpha subunit, as well as via activation of phospholipase C for beta and gamma subunits, with ultimate increase inositol trisphosphate and increase of intracellular Calcium. GNAT3 can functionally couple to taste receptors to transmit intracellular signal: receptor heterodimer TAS1R2/TAS1R3 senses sweetness and TAS1R1/TAS1R3 transduces umami taste, whereas the T2R family GPCRs act as bitter sensors. Also functions as lumenal sugar sensors in the gut to control the expression of the Na+-glucose transporter SGLT1 in response to dietaty sugar, as well as the secretion of Glucagon-like peptide-1, GLP-1 and glucose-dependent insulinotropic polypeptide, GIP. Thus, may modulate the gut capacity to absorb sugars, with implications for the prevention and treatment of malabsorption syndromes and diet-related disorders including diabetes and obesity. The sequence is that of Guanine nucleotide-binding protein G(t) subunit alpha-3 (Gnat3) from Rattus norvegicus (Rat).